The sequence spans 286 residues: Acyl-CoA-binding domain-containing protein 6 (286 aa).

The ACB domain maps to 32-117 (LQCQFEQAAK…VKKLDPDWSP (86 aa)). Residues 59 to 63 (YARYK), Lys85, and Tyr104 each bind an acyl-CoA. 2 ANK repeats span residues 182–211 (EGRS…HINM) and 215–244 (EGQT…DPSL).

It is found in the cytoplasm. The protein resides in the nucleus. Binds long-chain acyl-coenzyme A molecules with a strong preference for unsaturated C18:1-CoA. Does not bind fatty acids. Plays a role in protein N-myristoylation. The sequence is that of Acyl-CoA-binding domain-containing protein 6 (acbd6) from Xenopus laevis (African clawed frog).